Reading from the N-terminus, the 60-residue chain is uncharacterized protein (60 aa).

The chain crosses the membrane as a helical span at residues 33-55 (FRLLRGIFLITLVIWTVVWLKLL).

Belongs to the HHV-5 UL2 protein family.

It localises to the host membrane. This is an uncharacterized protein from Human cytomegalovirus (strain AD169) (HHV-5).